We begin with the raw amino-acid sequence, 73 residues long: MPDSAQPLSERLDALEIRIAYQDETIETLNATITAQWQQIDALTRQIKAFHDRLQQAESNAPAAPANERPPHY.

Residues 54-73 (LQQAESNAPAAPANERPPHY) are disordered. Residues 57–67 (AESNAPAAPAN) show a composition bias toward low complexity.

Belongs to the SlyX family.

The polypeptide is Protein SlyX homolog (Rhodopseudomonas palustris (strain BisA53)).